A 185-amino-acid polypeptide reads, in one-letter code: Ribosome-recycling factor (185 aa).

The protein belongs to the RRF family.

The protein resides in the cytoplasm. Responsible for the release of ribosomes from messenger RNA at the termination of protein biosynthesis. May increase the efficiency of translation by recycling ribosomes from one round of translation to another. The polypeptide is Ribosome-recycling factor (Shouchella clausii (strain KSM-K16) (Alkalihalobacillus clausii)).